Here is a 167-residue protein sequence, read N- to C-terminus: UPF0179 protein PAE0681 (167 aa).

The disordered stretch occupies residues 142–167 (PSPSGSSISATSQGPSRAPPSRRLLK). Positions 145–157 (SGSSISATSQGPS) are enriched in low complexity.

Belongs to the UPF0179 family.

This chain is UPF0179 protein PAE0681, found in Pyrobaculum aerophilum (strain ATCC 51768 / DSM 7523 / JCM 9630 / CIP 104966 / NBRC 100827 / IM2).